The sequence spans 748 residues: E3 ubiquitin-protein ligase DTX3L (748 aa).

Alanine 2 carries the post-translational modification N-acetylalanine. Serine 9 carries the post-translational modification Phosphoserine. Disordered regions lie at residues 94 to 117 (DLRP…PSLT), 209 to 238 (EQKR…PPDQ), and 528 to 562 (QETP…PAAS). The span at 101-117 (SLTQPVETPSSRPPSLT) shows a compositional bias: polar residues. 2 stretches are compositionally biased toward basic and acidic residues: residues 209-219 (EQKRKGSEQKR) and 227-236 (TPPDVEREPP). Phosphoserine is present on serine 215. Position 536 is a phosphoserine (serine 536). The segment at 569 to 608 (CVICMDTISNKHVLPKCKHEFCTSCISKAMLIKPVCPVCL) adopts an RING-type zinc-finger fold.

Belongs to the Deltex family. Homodimer and heterodimer. Can heterodimerize with DTX1, enhancing its ubiquitin ligase activity in vitro. Interacts (via N-terminus) with ADP ribosyltransferase PARP9/BAL1 (via PARP catalytic domain) forming a stable complex; the interaction is required to activate PARP9 but is dispensable for DTX3L catalytic activity. Forms a complex with STAT1 and PARP9 independently of IFNB1 or IFNG-mediated STAT1 'Tyr-701' phosphorylation. Found in a complex with PARP9, STAT1 and H2BC9. Found in a complex with E3 ligase ITCH and ESCRT-0 components HGS and STAM. Interacts (via C-terminus) with ITCH; the interaction is increased upon CXCL12 stimulation and inhibits ITCH catalytic activity; the interaction is direct. Interacts with HGS and STAM; the interaction brings together HGS and STAM and promotes their recruitment to early endosomes. Autoubiquitinated.

The protein resides in the cytoplasm. It is found in the nucleus. Its subcellular location is the early endosome membrane. The protein localises to the lysosome membrane. It carries out the reaction S-ubiquitinyl-[E2 ubiquitin-conjugating enzyme]-L-cysteine + [acceptor protein]-L-lysine = [E2 ubiquitin-conjugating enzyme]-L-cysteine + N(6)-ubiquitinyl-[acceptor protein]-L-lysine.. Its pathway is protein modification; protein ubiquitination. Its activity is regulated as follows. Binding to PARP9 enhances DTX3L catalytic activity. Its function is as follows. E3 ubiquitin-protein ligase which, in association with ADP-ribosyltransferase PARP9, plays a role in DNA damage repair and in interferon-mediated antiviral responses. Monoubiquitinates several histones, including histone H2A, H2B, H3 and H4. In response to DNA damage, mediates monoubiquitination of 'Lys-91' of histone H4 (H4K91ub1). The exact role of H4K91ub1 in DNA damage response is still unclear but it may function as a licensing signal for additional histone H4 post-translational modifications such as H4 'Lys-20' methylation (H4K20me). PARP1-dependent PARP9-DTX3L-mediated ubiquitination promotes the rapid and specific recruitment of 53BP1/TP53BP1, UIMC1/RAP80, and BRCA1 to DNA damage sites. By monoubiquitinating histone H2B H2BC9/H2BJ and thereby promoting chromatin remodeling, positively regulates STAT1-dependent interferon-stimulated gene transcription and thus STAT1-mediated control of viral replication. Independently of its catalytic activity, promotes the sorting of chemokine receptor CXCR4 from early endosome to lysosome following CXCL12 stimulation by reducing E3 ligase ITCH activity and thus ITCH-mediated ubiquitination of endosomal sorting complex required for transport ESCRT-0 components HGS and STAM. In addition, required for the recruitment of HGS and STAM to early endosomes. The chain is E3 ubiquitin-protein ligase DTX3L (Dtx3l) from Mus musculus (Mouse).